The following is a 263-amino-acid chain: Outer membrane protein OmpK (263 aa).

An N-terminal signal peptide occupies residues 1–20; it reads MRKSLLALSLLAATSAPVLA.

It belongs to the nucleoside-specific channel-forming outer membrane porin (Tsx) (TC 1.B.10) family.

The protein localises to the cell outer membrane. Its function is as follows. Serves as receptor for a broad-host-range vibriophage, KVP40. In Vibrio parahaemolyticus, this protein is Outer membrane protein OmpK.